The sequence spans 39 residues: Omega-actinopoditoxin-Mb1a (39 aa).

Intrachain disulfides connect Cys4-Cys19, Cys11-Cys30, and Cys18-Cys38.

Contains 3 disulfide bonds. In terms of tissue distribution, expressed by the venom gland.

The protein localises to the secreted. In terms of biological role, potent inhibitor of insect, but not mammalian, voltage-gated calcium channels (Cav). This is Omega-actinopoditoxin-Mb1a from Missulena bradleyi (Eastern mouse spider).